A 119-amino-acid chain; its full sequence is Large ribosomal subunit protein bL20 (119 aa).

Belongs to the bacterial ribosomal protein bL20 family.

In terms of biological role, binds directly to 23S ribosomal RNA and is necessary for the in vitro assembly process of the 50S ribosomal subunit. It is not involved in the protein synthesizing functions of that subunit. This chain is Large ribosomal subunit protein bL20, found in Clostridium botulinum (strain ATCC 19397 / Type A).